The primary structure comprises 196 residues: Imidazoleglycerol-phosphate dehydratase (196 aa).

This sequence belongs to the imidazoleglycerol-phosphate dehydratase family.

Its subcellular location is the cytoplasm. It carries out the reaction D-erythro-1-(imidazol-4-yl)glycerol 3-phosphate = 3-(imidazol-4-yl)-2-oxopropyl phosphate + H2O. It participates in amino-acid biosynthesis; L-histidine biosynthesis; L-histidine from 5-phospho-alpha-D-ribose 1-diphosphate: step 6/9. The polypeptide is Imidazoleglycerol-phosphate dehydratase (Nitratidesulfovibrio vulgaris (strain DSM 19637 / Miyazaki F) (Desulfovibrio vulgaris)).